The sequence spans 382 residues: Pectinesterase (382 aa).

An N-terminal signal peptide occupies residues 1 to 16 (MKIIVLLLLAVVLASA). Cysteines 153 and 164 form a disulfide. A glycan (N-linked (GlcNAc...) asparagine) is linked at N179. Q193 contributes to the substrate binding site. D216 serves as the catalytic Proton donor. The Nucleophile role is filled by D242. 2 residues coordinate substrate: R306 and W308. N340 and N376 each carry an N-linked (GlcNAc...) asparagine glycan.

This sequence belongs to the pectinesterase family. Expressed throughout the midgut with particularly strong expression in the ventriculus.

The protein localises to the secreted. The enzyme catalyses [(1-&gt;4)-alpha-D-galacturonosyl methyl ester](n) + n H2O = [(1-&gt;4)-alpha-D-galacturonosyl](n) + n methanol + n H(+). The protein operates within glycan metabolism; pectin degradation; 2-dehydro-3-deoxy-D-gluconate from pectin: step 1/5. Its function is as follows. Pectinesterase which probably plays an important role in the digestion of plant cell walls. This is Pectinesterase from Sitophilus oryzae (Rice weevil).